We begin with the raw amino-acid sequence, 380 residues long: KEGLAPYIAETALRNLYLGTGIKEEEIEKYLKQFIKDLPGYIEDYNEDVFHQSGTVDAGAQGGSGSQGTTPPATGSGAKPATSGAGSGSGTGAGTGVTGGQARTGSGTGTGSGATGGQSGSGSGTEQVNTGSAGTNATGGQRDRDVDAGSTGKISVPKLKAMSKKMRLPKAKAKDVLHLDFLLTYKPQQQDISNTRATKEEFDRWYDAYKKEYEIDDTQMTVVMSGLMVWCIENGCSPNINGNWTMMDKDEQRVFPLKPVIENASPTFRQIMHHFSDAAEAYIEYRNSTERYMPRYGLQRNISDYSLARYAFDFYEMTSRTPARAKEAHMQMKAAAVRGSNTRLFGLDGNVGETQENTERHTAGDVSRNMHSLLGVQQHH.

Disordered regions lie at residues 54 to 154 and 349 to 380; these read GTVD…TGKI and GNVGETQENTERHTAGDVSRNMHSLLGVQQHH. Residues 67-84 are compositionally biased toward low complexity; sequence QGTTPPATGSGAKPATSG. Gly residues-rich tracts occupy residues 85–99 and 106–123; these read AGSGSGTGAGTGVTG and SGTGTGSGATGGQSGSGS. Residues 129-140 show a composition bias toward low complexity; it reads NTGSAGTNATGG.

This sequence belongs to the potyviridae genome polyprotein family. In terms of processing, genome polyprotein of potyviruses undergoes post-translational proteolytic processing by the main proteinase NIa-pro resulting in the production of at least ten individual proteins. The P1 proteinase and the HC-pro cleave only their respective C-termini autocatalytically. 6K1 is essential for proper proteolytic separation of P3 from CI.

The protein localises to the virion. It carries out the reaction RNA(n) + a ribonucleoside 5'-triphosphate = RNA(n+1) + diphosphate. In terms of biological role, an RNA-dependent RNA polymerase that plays an essential role in the virus replication. Its function is as follows. Involved in aphid transmission, cell-to-cell and systemis movement, encapsidation of the viral RNA and in the regulation of viral RNA amplification. The chain is Genome polyprotein from Sorghum halepense (Johnson grass).